The chain runs to 143 residues: Flagellar assembly factor FliW (143 aa).

It belongs to the FliW family. Interacts with translational regulator CsrA and flagellin(s).

It localises to the cytoplasm. In terms of biological role, acts as an anti-CsrA protein, binds CsrA and prevents it from repressing translation of its target genes, one of which is flagellin. Binds to flagellin and participates in the assembly of the flagellum. This chain is Flagellar assembly factor FliW, found in Bacillus velezensis (strain DSM 23117 / BGSC 10A6 / LMG 26770 / FZB42) (Bacillus amyloliquefaciens subsp. plantarum).